The primary structure comprises 70 residues: Translational regulator CsrA (70 aa).

Belongs to the CsrA/RsmA family. Homodimer; the beta-strands of each monomer intercalate to form a hydrophobic core, while the alpha-helices form wings that extend away from the core.

The protein localises to the cytoplasm. Its function is as follows. A key translational regulator that binds mRNA to regulate translation initiation and/or mRNA stability. Mediates global changes in gene expression, shifting from rapid growth to stress survival by linking envelope stress, the stringent response and the catabolite repression systems. Usually binds in the 5'-UTR; binding at or near the Shine-Dalgarno sequence prevents ribosome-binding, repressing translation, binding elsewhere in the 5'-UTR can activate translation and/or stabilize the mRNA. Its function is antagonized by small RNA(s). This chain is Translational regulator CsrA, found in Hydrogenovibrio crunogenus (strain DSM 25203 / XCL-2) (Thiomicrospira crunogena).